We begin with the raw amino-acid sequence, 380 residues long: Erythronate-4-phosphate dehydrogenase (380 aa).

Residues S45 and T66 each contribute to the substrate site. Residues D146, T174, 205–207 (ASR), and D231 each bind NAD(+). R207 is a catalytic residue. Residue E236 is part of the active site. Residue H253 is the Proton donor of the active site. G256 is an NAD(+) binding site. Residue Y257 participates in substrate binding.

Belongs to the D-isomer specific 2-hydroxyacid dehydrogenase family. PdxB subfamily. As to quaternary structure, homodimer.

It localises to the cytoplasm. It catalyses the reaction 4-phospho-D-erythronate + NAD(+) = (R)-3-hydroxy-2-oxo-4-phosphooxybutanoate + NADH + H(+). It functions in the pathway cofactor biosynthesis; pyridoxine 5'-phosphate biosynthesis; pyridoxine 5'-phosphate from D-erythrose 4-phosphate: step 2/5. Its function is as follows. Catalyzes the oxidation of erythronate-4-phosphate to 3-hydroxy-2-oxo-4-phosphonooxybutanoate. In Pseudomonas putida (strain GB-1), this protein is Erythronate-4-phosphate dehydrogenase.